The primary structure comprises 219 residues: Dehydration-responsive element-binding protein 1E (219 aa).

The span at 1–19 shows a compositional bias: low complexity; the sequence is MEWAYYGSGYSSSGTPSPV. The segment at 1–44 is disordered; that stretch reads MEWAYYGSGYSSSGTPSPVGGDGDEDSYMTVSSAPPKRRAGRTK. Positions 52 to 109 form a DNA-binding region, AP2/ERF; it reads VYKGVRSRNPGRWVCEVREPHGKQRIWLGTFETAEMAARAHDVAAMALRGRAACLNFA.

Belongs to the AP2/ERF transcription factor family. ERF subfamily.

It is found in the nucleus. Transcriptional activator that binds specifically to the DNA sequence 5'-[AG]CCGAC-3'. Binding to the C-repeat/DRE element mediates high salinity- and dehydration-inducible transcription. The sequence is that of Dehydration-responsive element-binding protein 1E (DREB1E) from Oryza sativa subsp. indica (Rice).